Consider the following 349-residue polypeptide: MIRGLRQIEPYVAGVQPAERKMIKLNTNENAYGASPKVREALANFDVDNLRKYSTLEQADLRAALANNLKVKPEQLMIANGSDDVLSIAFLAFFNNDEPVLFPDLTYGFYKVWADLYRVNYHEIPLAEDFTINTEDYLADNGGIILTNPNAPTGIYKPLNEIEKLLKANQDTVVIIDEAYISFGGQSALSLLNKYNNLVITRTFSKDAALAGLRVGYAIANEPLIAVMNAVKHSINPYSVDLLAERLATAAVEDWSYYQENAKKIQKTRAWFSEQLVKQGFDVLPSQANFVLTKPHDLATAKLFEELEARKIYVRYFPKVERIKDYLRISMGTQEEMEEVVKAIEEIRG.

Lys206 carries the N6-(pyridoxal phosphate)lysine modification.

The protein belongs to the class-II pyridoxal-phosphate-dependent aminotransferase family. Histidinol-phosphate aminotransferase subfamily. Homodimer. Pyridoxal 5'-phosphate is required as a cofactor.

The catalysed reaction is L-histidinol phosphate + 2-oxoglutarate = 3-(imidazol-4-yl)-2-oxopropyl phosphate + L-glutamate. It functions in the pathway amino-acid biosynthesis; L-histidine biosynthesis; L-histidine from 5-phospho-alpha-D-ribose 1-diphosphate: step 7/9. The protein is Histidinol-phosphate aminotransferase of Streptococcus mutans serotype c (strain ATCC 700610 / UA159).